The sequence spans 151 residues: S-ribosylhomocysteine lyase (151 aa).

Positions 54, 58, and 121 each coordinate Fe cation.

This sequence belongs to the LuxS family. As to quaternary structure, homodimer. The cofactor is Fe cation.

It carries out the reaction S-(5-deoxy-D-ribos-5-yl)-L-homocysteine = (S)-4,5-dihydroxypentane-2,3-dione + L-homocysteine. Its function is as follows. Involved in the synthesis of autoinducer 2 (AI-2) which is secreted by bacteria and is used to communicate both the cell density and the metabolic potential of the environment. The regulation of gene expression in response to changes in cell density is called quorum sensing. Catalyzes the transformation of S-ribosylhomocysteine (RHC) to homocysteine (HC) and 4,5-dihydroxy-2,3-pentadione (DPD). The protein is S-ribosylhomocysteine lyase of Clostridium botulinum (strain Alaska E43 / Type E3).